We begin with the raw amino-acid sequence, 421 residues long: Imidazolonepropionase (421 aa).

The Fe(3+) site is built by histidine 81 and histidine 83. The Zn(2+) site is built by histidine 81 and histidine 83. 4-imidazolone-5-propanoate-binding residues include arginine 90, tyrosine 153, and histidine 186. An N-formimidoyl-L-glutamate-binding site is contributed by tyrosine 153. Fe(3+) is bound at residue histidine 251. Histidine 251 provides a ligand contact to Zn(2+). Glutamate 254 contributes to the 4-imidazolone-5-propanoate binding site. Aspartate 326 provides a ligand contact to Fe(3+). Position 326 (aspartate 326) interacts with Zn(2+). Residues asparagine 328 and glycine 330 each contribute to the N-formimidoyl-L-glutamate site. Serine 331 provides a ligand contact to 4-imidazolone-5-propanoate.

This sequence belongs to the metallo-dependent hydrolases superfamily. HutI family. It depends on Zn(2+) as a cofactor. Fe(3+) is required as a cofactor.

The protein resides in the cytoplasm. It catalyses the reaction 4-imidazolone-5-propanoate + H2O = N-formimidoyl-L-glutamate. The protein operates within amino-acid degradation; L-histidine degradation into L-glutamate; N-formimidoyl-L-glutamate from L-histidine: step 3/3. Its function is as follows. Catalyzes the hydrolytic cleavage of the carbon-nitrogen bond in imidazolone-5-propanoate to yield N-formimidoyl-L-glutamate. It is the third step in the universal histidine degradation pathway. The sequence is that of Imidazolonepropionase from Streptococcus pyogenes serotype M1.